Consider the following 330-residue polypeptide: GTP 3',8-cyclase (330 aa).

The 217-residue stretch at 9–225 folds into the Radical SAM core domain; sequence RFGRTVNYVR…IRRHHELIPA (217 aa). GTP is bound at residue R18. [4Fe-4S] cluster-binding residues include C25 and C29. Position 31 (Y31) interacts with S-adenosyl-L-methionine. C32 is a binding site for [4Fe-4S] cluster. Residue R67 coordinates GTP. G71 provides a ligand contact to S-adenosyl-L-methionine. T97 is a binding site for GTP. S121 is an S-adenosyl-L-methionine binding site. K158 lines the GTP pocket. S-adenosyl-L-methionine is bound at residue M192. C256 and C259 together coordinate [4Fe-4S] cluster. GTP is bound at residue 261–263; that stretch reads RVR. Residue C273 coordinates [4Fe-4S] cluster.

The protein belongs to the radical SAM superfamily. MoaA family. Monomer and homodimer. [4Fe-4S] cluster serves as cofactor.

It catalyses the reaction GTP + AH2 + S-adenosyl-L-methionine = (8S)-3',8-cyclo-7,8-dihydroguanosine 5'-triphosphate + 5'-deoxyadenosine + L-methionine + A + H(+). The protein operates within cofactor biosynthesis; molybdopterin biosynthesis. In terms of biological role, catalyzes the cyclization of GTP to (8S)-3',8-cyclo-7,8-dihydroguanosine 5'-triphosphate. The polypeptide is GTP 3',8-cyclase (Marinobacter nauticus (strain ATCC 700491 / DSM 11845 / VT8) (Marinobacter aquaeolei)).